Here is a 134-residue protein sequence, read N- to C-terminus: Small ribosomal subunit protein uS9 (134 aa).

Residues 114–134 form a disordered region; it reads QKESKNFGGPGARAKYQKSYR.

Belongs to the universal ribosomal protein uS9 family.

In Methanosarcina acetivorans (strain ATCC 35395 / DSM 2834 / JCM 12185 / C2A), this protein is Small ribosomal subunit protein uS9.